Consider the following 331-residue polypeptide: Tetraacyldisaccharide 4'-kinase (331 aa).

55–62 is an ATP binding site; sequence SVGGNGKT.

This sequence belongs to the LpxK family.

It catalyses the reaction a lipid A disaccharide + ATP = a lipid IVA + ADP + H(+). It participates in glycolipid biosynthesis; lipid IV(A) biosynthesis; lipid IV(A) from (3R)-3-hydroxytetradecanoyl-[acyl-carrier-protein] and UDP-N-acetyl-alpha-D-glucosamine: step 6/6. Functionally, transfers the gamma-phosphate of ATP to the 4'-position of a tetraacyldisaccharide 1-phosphate intermediate (termed DS-1-P) to form tetraacyldisaccharide 1,4'-bis-phosphate (lipid IVA). This chain is Tetraacyldisaccharide 4'-kinase, found in Aeromonas salmonicida (strain A449).